We begin with the raw amino-acid sequence, 277 residues long: Shikimate dehydrogenase (NADP(+)) (277 aa).

Shikimate-binding positions include 15–17 (SLS) and T62. The active-site Proton acceptor is K66. N87 and D102 together coordinate shikimate. NADP(+) contacts are provided by residues 127 to 131 (GAGGA), 151 to 156 (NRTVDK), and I219. Residue Y221 coordinates shikimate. An NADP(+)-binding site is contributed by G242.

It belongs to the shikimate dehydrogenase family. Homodimer.

The catalysed reaction is shikimate + NADP(+) = 3-dehydroshikimate + NADPH + H(+). It participates in metabolic intermediate biosynthesis; chorismate biosynthesis; chorismate from D-erythrose 4-phosphate and phosphoenolpyruvate: step 4/7. Its function is as follows. Involved in the biosynthesis of the chorismate, which leads to the biosynthesis of aromatic amino acids. Catalyzes the reversible NADPH linked reduction of 3-dehydroshikimate (DHSA) to yield shikimate (SA). The polypeptide is Shikimate dehydrogenase (NADP(+)) (Bacillus thuringiensis subsp. konkukian (strain 97-27)).